The primary structure comprises 751 residues: FAD-dependent monooxygenase atnA (751 aa).

The helical transmembrane segment at 8–28 (LIVGGGVAGLSLAIMLEAYGF) threads the bilayer. FAD contacts are provided by glutamate 34, glycine 48, and arginine 109. Residue tyrosine 218 is part of the active site. Residues aspartate 311 and alanine 324 each coordinate FAD. Helical transmembrane passes span 446–466 (PLAT…PWSV), 481–501 (SEVF…LWVI), 508–528 (LLIS…YWGW), 563–583 (ALLP…ALAS), 590–610 (DWWP…STFL), 639–659 (IAVV…AALL), 663–683 (IISL…ALIV), and 706–726 (AWAV…LAGA).

The protein belongs to the paxM FAD-dependent monooxygenase family. FAD is required as a cofactor.

The protein localises to the membrane. It participates in secondary metabolite biosynthesis; terpenoid biosynthesis. Functionally, FAD-dependent monooxygenase; part of the gene cluster that mediates the biosynthesis of the meroterpenoids arthripenoids. The pathway begins with the HR-PKS atnH that catalyzes two chain-extension steps to form a reduced triketide, which then primes the SAT domain in the NR-PKS atnG to initiate three more cycles of extension to give a linear hexaketide corresponding to the polyketide part of arthripenoids. The FAD-dependent monooxygenase atnJ then performs an oxidative decarboxylation at C11 of the atnH/atnG product, via an electrophilic aromatic hydroxylation with concomitant ipso-decarboxylation. The membrane-bound polyprenyl transferase atnF then introduces a farnesyl group before the FAD-dependent monooxygenase atnK functions as the first epoxidase on terminal C12'-C13' olefin, followed by a second epoxidation on C7'-C8' catalyzed by atnA. The terpene cyclase/mutase atnI then initiates the sequential tricyclic ring formation through protonation of the terminal epoxide and catalyzes the regioselective and stereoselective 6/6/6-tricyclic ring formation. The cytochrome P450 monooxygenase atnM is responsible for hydroxylating both C1' and C10'. The next steps may involve ketoreduction and acetyl transfer by the ketoreductase atnB and the acetyltransferase atnC, and lead to the production of arthripenoid B, the final biosynthetic product of the atn cluster. The hydroquinone moiety in arthripenoid B is prone to undergo spontaneous oxidation to afford a benzoquinone compound, a key intermediate for generating structure diversity. For instance, addition of a cysteine followed by ring contraction gives arthripenoid A, tautomerization gives the main product arthripenoid C, addition of a molecular of water or amine affords arthripenoid D or E, respectively, and loss of one water forms arthripenoid F. This Arthrinium sp protein is FAD-dependent monooxygenase atnA.